The following is a 394-amino-acid chain: GDSL esterase/lipase At2g27360 (394 aa).

A signal peptide spans 1-24 (MASQDCHMLLSFFISTFLITVVTS). Catalysis depends on Ser-40, which acts as the Nucleophile. N-linked (GlcNAc...) asparagine glycans are attached at residues Asn-136 and Asn-319. Active-site residues include Asp-344 and His-347. N-linked (GlcNAc...) asparagine glycosylation is found at Asn-371 and Asn-382.

This sequence belongs to the 'GDSL' lipolytic enzyme family.

Its subcellular location is the secreted. The chain is GDSL esterase/lipase At2g27360 from Arabidopsis thaliana (Mouse-ear cress).